The chain runs to 176 residues: ATP synthase subunit b (176 aa).

The helical transmembrane segment at 18-38 (FGLDATVWVSIAMLVFLGILV) threads the bilayer.

This sequence belongs to the ATPase B chain family. F-type ATPases have 2 components, F(1) - the catalytic core - and F(0) - the membrane proton channel. F(1) has five subunits: alpha(3), beta(3), gamma(1), delta(1), epsilon(1). F(0) has three main subunits: a(1), b(2) and c(10-14). The alpha and beta chains form an alternating ring which encloses part of the gamma chain. F(1) is attached to F(0) by a central stalk formed by the gamma and epsilon chains, while a peripheral stalk is formed by the delta and b chains.

It is found in the cell inner membrane. Functionally, f(1)F(0) ATP synthase produces ATP from ADP in the presence of a proton or sodium gradient. F-type ATPases consist of two structural domains, F(1) containing the extramembraneous catalytic core and F(0) containing the membrane proton channel, linked together by a central stalk and a peripheral stalk. During catalysis, ATP synthesis in the catalytic domain of F(1) is coupled via a rotary mechanism of the central stalk subunits to proton translocation. In terms of biological role, component of the F(0) channel, it forms part of the peripheral stalk, linking F(1) to F(0). This chain is ATP synthase subunit b, found in Sphingopyxis alaskensis (strain DSM 13593 / LMG 18877 / RB2256) (Sphingomonas alaskensis).